A 126-amino-acid polypeptide reads, in one-letter code: Holo-[acyl-carrier-protein] synthase (126 aa).

Residues Asp-9 and Glu-58 each coordinate Mg(2+).

It belongs to the P-Pant transferase superfamily. AcpS family. It depends on Mg(2+) as a cofactor.

Its subcellular location is the cytoplasm. The enzyme catalyses apo-[ACP] + CoA = holo-[ACP] + adenosine 3',5'-bisphosphate + H(+). Functionally, transfers the 4'-phosphopantetheine moiety from coenzyme A to a Ser of acyl-carrier-protein. This chain is Holo-[acyl-carrier-protein] synthase, found in Escherichia coli O139:H28 (strain E24377A / ETEC).